The primary structure comprises 73 residues: Kappa-scoloptoxin SsmTx-I (73 aa).

The first 25 residues, 1 to 25, serve as a signal peptide directing secretion; the sequence is MMMMFSVVSVFLMLLLLKFHDLSMG. The propeptide occupies 26 to 37; the sequence is EEISLLKKVVRR. Cystine bridges form between Cys-45–Cys-56 and Cys-50–Cys-63.

It belongs to the scoloptoxin-04 family. Expressed by the venom gland.

Its subcellular location is the secreted. Its function is as follows. Exhibits highly specific blockage of Kv2.1/KCNB1 (IC(50)=41.7 nM) voltage-gated potassium channels. This blockage is not associated with a significant change in steady-state activation, suggesting that this toxin acts as a channel blocker rather than a gating-modifier. Shows potential analgesic activities in formalin-induced paw licking, thermal pain, and acetic acid-induced abdominal writhing mice models. In Scolopendra mutilans (Chinese red-headed centipede), this protein is Kappa-scoloptoxin SsmTx-I.